We begin with the raw amino-acid sequence, 897 residues long: Protein translocase subunit SecA (897 aa).

ATP contacts are provided by residues Gln-87, Gly-105–Thr-109, and Asp-512. Residues Glu-846–Lys-897 form a disordered region. Positions 883, 885, 894, and 895 each coordinate Zn(2+).

This sequence belongs to the SecA family. As to quaternary structure, monomer and homodimer. Part of the essential Sec protein translocation apparatus which comprises SecA, SecYEG and auxiliary proteins SecDF-YajC and YidC. Zn(2+) is required as a cofactor.

It localises to the cell inner membrane. The protein localises to the cytoplasm. The catalysed reaction is ATP + H2O + cellular proteinSide 1 = ADP + phosphate + cellular proteinSide 2.. In terms of biological role, part of the Sec protein translocase complex. Interacts with the SecYEG preprotein conducting channel. Has a central role in coupling the hydrolysis of ATP to the transfer of proteins into and across the cell membrane, serving as an ATP-driven molecular motor driving the stepwise translocation of polypeptide chains across the membrane. This Geobacter sulfurreducens (strain ATCC 51573 / DSM 12127 / PCA) protein is Protein translocase subunit SecA.